The following is a 1366-amino-acid chain: MTSTSPKSRRSSGKGRKGSKKKGKQVSQIPPLSKTPPSFRNRIVDKKALKQLVAWAYKNHGTAVTAAMADNLKDLGFKYATQAAVSISVDDLKVPDAKQDLLGEAEQQITATEECYRLGEITEVERHTKVIDTWTETNERLVDAVKKNFNQNDPLNSVWMMANSGARGNMSQVRQLVGMRGLMANPQGEIIDLPIRTNFREGLTVTEYVISSYGARKGLVDTALRTADSGYLTRRLVDVAQDVIVREEDCGTSRAILVKAEDGRFGNRLVGRLTAEQIVGDADEIIAKKDTAIDPELSKKIEKAGLAGIMVRSPLTCEATRSVCRKCYGWALAHNNLVDLGEAVGIIAAQSIGEPGTQLTMRTFHTGGVSTAETGVVRSTIAGKVEFGPNARVRGYRTPHGVEAQQAEVDFTLKVKPTGSGKTQTIEISNGSLIFVDNAQEIAADVTVAQITAGAVKKSVEKATKDVICDLAGQVRYESVIQPREVTDRQGNITLKAQRLGRLWVLAGDVYNLPPNARPVVKANSKVSKGMVLAEASQASEFGGEVRLRDSIGDSREVQIVTTSMTLKDFKLLEESTHTGEIWNLEAKDGTRYRLNSIPGSKISSGEIVAELADDRFRTKTGGLVKYAPGLAIKKARSAKNGFEVSNGGTLIWVPQETHEINKDISLLMIKDRQWIEAGTEVVKDIFSQTAGIVTVTQKNDILREIIVRSGEFHLCNESKVLERFEDEGQMVNPGENIAKGLKADSMVLVQTVESRDGKGLLLRPVEEYTIPDQAQLPELSHVKQEKGPSLGLRATQRLAFKDGELIKSVEGVELLKTQLILDTFETTPQMTVDVEVALDKRAKTINRLRLVILESILVRRDTMSDSSHGSTHTELQIKDNQLVNADDVVATTQILCKEDGIVQLPNAVDDEPIRRLIVERAQDTTVLTAKDNPILKVGERVVDGDLLSKGEPINCCGEVEDIKGNKVTLRLGRPYMVSPDSVLHVRDGDLVQRGDGLALLVFERQKTGDIVQGLPRIEELLEARRPRESAILCKKPGIVEIKQEEDDESVVVKVIESDDSLSEYSILLGRNVMVSDGQEVHAGEFLTDGPVNPHELLECFFGDLRDRKPLLEAAQESIAKLQHRLVTEVQNVYKSQGVSIDDKHIEVIVRQMTSKVRIEDAGDTTLLPGELIEIRQVEDTNQAISVTGGAPAEFTPVLLGITKASLNTDSFISAASFQETTRVLTEAAIEGKSDWLRGLKENVIIGRLIPAGTGFSGFVEELRAEAGPHPDILAEDPAGYRRMQNLRPDYTVEMPVSTAAKSTSVLDDPSEEDLEATRSRHGIDPTTSNFAAFARPSGDDPSQEDQKPDPIALEGLQEEGLLADE.

Positions 1–40 (MTSTSPKSRRSSGKGRKGSKKKGKQVSQIPPLSKTPPSFR) are disordered. Residues 7–24 (KSRRSSGKGRKGSKKKGK) show a composition bias toward basic residues. Positions 25-38 (QVSQIPPLSKTPPS) are enriched in polar residues. Positions 250, 317, 324, and 327 each coordinate Zn(2+). The disordered stretch occupies residues 1299-1366 (TAAKSTSVLD…LQEEGLLADE (68 aa)). A compositionally biased stretch (low complexity) spans 1353-1366 (ALEGLQEEGLLADE).

It belongs to the RNA polymerase beta' chain family. RpoC2 subfamily. In terms of assembly, in cyanobacteria the RNAP catalytic core is composed of 2 alpha, 1 beta, 1 beta', 1 gamma and 1 omega subunit. When a sigma factor is associated with the core the holoenzyme is formed, which can initiate transcription. It depends on Zn(2+) as a cofactor.

It catalyses the reaction RNA(n) + a ribonucleoside 5'-triphosphate = RNA(n+1) + diphosphate. Its function is as follows. DNA-dependent RNA polymerase catalyzes the transcription of DNA into RNA using the four ribonucleoside triphosphates as substrates. This Prochlorococcus marinus (strain MIT 9211) protein is DNA-directed RNA polymerase subunit beta'.